The primary structure comprises 474 residues: Polyamine oxidase 7 (474 aa).

The N-terminal stretch at 1–27 (MTKPTTMAIFLSIVLLSMAQLPSLVAG) is a signal peptide. Glu-61 and Arg-69 together coordinate FAD. Asn-103 and Asn-150 each carry an N-linked (GlcNAc...) asparagine glycan. Val-261 contributes to the FAD binding site. N-linked (GlcNAc...) asparagine glycosylation is present at Asn-278. Glu-454 contacts FAD.

This sequence belongs to the flavin monoamine oxidase family. It depends on FAD as a cofactor.

It is found in the secreted. It localises to the extracellular space. The protein resides in the apoplast. It carries out the reaction spermine + O2 + H2O = 3-aminopropanal + spermidine + H2O2. It catalyses the reaction N(1)-acetylspermine + O2 + H2O = 3-acetamidopropanal + spermidine + H2O2. The enzyme catalyses norspermine + O2 + H2O = norspermidine + 3-aminopropanal + H2O2. The catalysed reaction is spermidine + O2 + H2O = 3-aminopropanal + putrescine + H2O2. It carries out the reaction N(1)-acetylspermidine + O2 + H2O = 3-acetamidopropanal + putrescine + H2O2. It catalyses the reaction thermospermine + O2 + H2O = 3-aminopropanal + spermidine + H2O2. Its pathway is amine and polyamine degradation; spermidine degradation. It functions in the pathway amine and polyamine degradation; spermine degradation. Flavoenzyme involved in polyamine back-conversion. Catalyzes the oxidation of the secondary amino group of polyamines, such as spermine, spermidine and their acetyl derivatives. Substrate preference is spermine &gt; spermidine &gt; N(1)-acetylspermine &gt; N(1)-acetylspermidine &gt; norspermine &gt; thermospermine. No activity detected when putrescine is used as substrate. May play a role in producing hydrogen peroxide for secondary wall thickening through lignin formation during anther development. This Oryza sativa subsp. japonica (Rice) protein is Polyamine oxidase 7.